We begin with the raw amino-acid sequence, 310 residues long: Probable GTP 3',8-cyclase (310 aa).

A Radical SAM core domain is found at 5–218; sequence KYGRSLQKLR…VNIIFELGGR (214 aa). Residue R14 coordinates GTP. [4Fe-4S] cluster-binding residues include C21, C25, and C28. K62 contacts GTP. G66 is an S-adenosyl-L-methionine binding site. Residue T91 participates in GTP binding. Residue S115 participates in S-adenosyl-L-methionine binding. K153 serves as a coordination point for GTP. Positions 251, 254, and 268 each coordinate [4Fe-4S] cluster.

The protein belongs to the radical SAM superfamily. MoaA family. It depends on [4Fe-4S] cluster as a cofactor.

It carries out the reaction GTP + AH2 + S-adenosyl-L-methionine = (8S)-3',8-cyclo-7,8-dihydroguanosine 5'-triphosphate + 5'-deoxyadenosine + L-methionine + A + H(+). The protein operates within cofactor biosynthesis; molybdopterin biosynthesis. Its function is as follows. Catalyzes the cyclization of GTP to (8S)-3',8-cyclo-7,8-dihydroguanosine 5'-triphosphate. This chain is Probable GTP 3',8-cyclase, found in Pyrobaculum aerophilum (strain ATCC 51768 / DSM 7523 / JCM 9630 / CIP 104966 / NBRC 100827 / IM2).